Reading from the N-terminus, the 85-residue chain is Large ribosomal subunit protein bL27 (85 aa).

The segment at 1 to 21 (MAHKKGASSSRNGRDSNAQRL) is disordered. The span at 7–19 (ASSSRNGRDSNAQ) shows a compositional bias: polar residues.

This sequence belongs to the bacterial ribosomal protein bL27 family.

This Beutenbergia cavernae (strain ATCC BAA-8 / DSM 12333 / CCUG 43141 / JCM 11478 / NBRC 16432 / NCIMB 13614 / HKI 0122) protein is Large ribosomal subunit protein bL27.